The primary structure comprises 109 residues: Probable endoribonuclease MazF5 (109 aa).

It belongs to the PemK/MazF family. Forms a complex with cognate antitoxin MazE5.

Toxic component of a type II toxin-antitoxin (TA) system. Upon expression in M.smegmatis inhibits colony formation. Its toxic effect is neutralized by coexpression with cognate antitoxin MazE5. Probably an endoribonuclease. In Mycobacterium tuberculosis (strain ATCC 25618 / H37Rv), this protein is Probable endoribonuclease MazF5 (mazF5).